We begin with the raw amino-acid sequence, 209 residues long: uncharacterized protein (209 aa).

Residues leucine 13–aspartate 75 are a coiled coil. The tract at residues alanine 107–threonine 135 is disordered. Over residues leucine 110–glutamine 119 the composition is skewed to polar residues. Over residues serine 120–serine 133 the composition is skewed to low complexity.

The protein belongs to the asfivirus K205R family.

The protein localises to the host cytoplasm. In terms of biological role, induces host endoplasmic reticulum stress and consequently activates autophagy and NF-kappa-B signaling pathway. In turn, may induce autophagy-mediated STING1 degradation and innate immune evasion. This is an uncharacterized protein from Ornithodoros (relapsing fever ticks).